Reading from the N-terminus, the 649-residue chain is Acetyl-coenzyme A synthetase (649 aa).

Residues 190–193 (RGGR) and threonine 310 each bind CoA. Residues 386-388 (GEP), 410-415 (DTWWQT), aspartate 499, and arginine 514 each bind ATP. CoA is bound at residue serine 522. Arginine 525 lines the ATP pocket. 3 residues coordinate Mg(2+): valine 536, histidine 538, and valine 541. A CoA-binding site is contributed by arginine 583. Lysine 608 is subject to N6-acetyllysine.

It belongs to the ATP-dependent AMP-binding enzyme family. The cofactor is Mg(2+). Post-translationally, acetylated. Deacetylation by the SIR2-homolog deacetylase activates the enzyme.

The catalysed reaction is acetate + ATP + CoA = acetyl-CoA + AMP + diphosphate. Catalyzes the conversion of acetate into acetyl-CoA (AcCoA), an essential intermediate at the junction of anabolic and catabolic pathways. AcsA undergoes a two-step reaction. In the first half reaction, AcsA combines acetate with ATP to form acetyl-adenylate (AcAMP) intermediate. In the second half reaction, it can then transfer the acetyl group from AcAMP to the sulfhydryl group of CoA, forming the product AcCoA. The protein is Acetyl-coenzyme A synthetase of Methylorubrum populi (strain ATCC BAA-705 / NCIMB 13946 / BJ001) (Methylobacterium populi).